The primary structure comprises 316 residues: Pantothenate kinase (316 aa).

ATP is bound at residue 95–102; the sequence is GSVAVGKS.

Belongs to the prokaryotic pantothenate kinase family.

The protein localises to the cytoplasm. It carries out the reaction (R)-pantothenate + ATP = (R)-4'-phosphopantothenate + ADP + H(+). Its pathway is cofactor biosynthesis; coenzyme A biosynthesis; CoA from (R)-pantothenate: step 1/5. In Shewanella sp. (strain ANA-3), this protein is Pantothenate kinase.